Here is a 336-residue protein sequence, read N- to C-terminus: Cell division protein ZipA (336 aa).

At Met-1–Leu-6 the chain is on the periplasmic side. Residues Val-7–Ile-27 traverse the membrane as a helical segment. Residues Arg-28–Val-336 are Cytoplasmic-facing. Disordered regions lie at residues Gln-31 to Ala-118 and Tyr-174 to Gly-200. Residues Leu-73 to Ser-91 are compositionally biased toward polar residues. Basic and acidic residues predominate over residues Thr-108 to Ala-118. Residues Gln-179–Pro-193 are compositionally biased toward low complexity.

The protein belongs to the ZipA family. Interacts with FtsZ via their C-terminal domains.

Its subcellular location is the cell inner membrane. Functionally, essential cell division protein that stabilizes the FtsZ protofilaments by cross-linking them and that serves as a cytoplasmic membrane anchor for the Z ring. Also required for the recruitment to the septal ring of downstream cell division proteins. This chain is Cell division protein ZipA, found in Shewanella denitrificans (strain OS217 / ATCC BAA-1090 / DSM 15013).